The chain runs to 1179 residues: Integrin alpha-1 (1179 aa).

A signal peptide spans methionine 1–serine 28. The Extracellular portion of the chain corresponds to phenylalanine 29–proline 1141. Residues asparagine 30–proline 91 form an FG-GAP 1 repeat. Asparagine 74 carries N-linked (GlcNAc...) asparagine glycosylation. The cysteines at positions 82 and 92 are disulfide-linked. N-linked (GlcNAc...) asparagine glycans are attached at residues asparagine 100, asparagine 105, asparagine 112, asparagine 217, asparagine 317, asparagine 341, asparagine 402, asparagine 418, and asparagine 460. An FG-GAP 2 repeat occupies threonine 101–serine 160. Residues isoleucine 161 to phenylalanine 360 enclose the VWFA domain. The FG-GAP 3 repeat unit spans residues threonine 365–arginine 417. 4 FG-GAP repeats span residues asparagine 422–isoleucine 475, lysine 476–tyrosine 538, serine 557–lysine 615, and glutamine 619–asparagine 679. Ca(2+)-binding residues include aspartate 498, aspartate 500, aspartate 502, and aspartate 506. Asparagine 532 carries N-linked (GlcNAc...) asparagine glycosylation. Residues aspartate 580, asparagine 582, aspartate 584, aspartate 588, aspartate 642, asparagine 644, aspartate 646, and aspartate 650 each coordinate Ca(2+). A disulfide bridge connects residues cysteine 688 and cysteine 697. N-linked (GlcNAc...) asparagine glycosylation is found at asparagine 699, asparagine 748, and asparagine 780. Cysteine 703 and cysteine 756 are disulfide-bonded. Cysteine 808 and cysteine 814 are oxidised to a cystine. N-linked (GlcNAc...) asparagine glycans are attached at residues asparagine 840, asparagine 883, asparagine 908, asparagine 915, asparagine 939, asparagine 966, asparagine 974, and asparagine 1008. An intrachain disulfide couples cysteine 878 to cysteine 886. Cystine bridges form between cysteine 1030-cysteine 1062 and cysteine 1065-cysteine 1072. Asparagine 1073, asparagine 1083, asparagine 1102, and asparagine 1113 each carry an N-linked (GlcNAc...) asparagine glycan. The chain crosses the membrane as a helical span at residues leucine 1142 to tryptophan 1164. Residues lysine 1165 to lysine 1179 are Cytoplasmic-facing. Residues glycine 1167–arginine 1171 carry the GFFKR motif motif.

The protein belongs to the integrin alpha chain family. In terms of assembly, heterodimer of an alpha and a beta subunit. Alpha-1 associates with beta-1. Interacts with RAB21. Interacts (via cytoplasmic domain) with PTPN2; activates PTPN2 phosphatase activity towards EGFR and negatively regulates EGF signaling.

It localises to the membrane. Integrin alpha-1/beta-1 is a receptor for laminin and collagen. It recognizes the proline-hydroxylated sequence G-F-P-G-E-R in collagen. Involved in anchorage-dependent, negative regulation of EGF-stimulated cell growth. In Homo sapiens (Human), this protein is Integrin alpha-1 (ITGA1).